A 388-amino-acid chain; its full sequence is Dual-specificity RNA methyltransferase RlmN (388 aa).

The Proton acceptor role is filled by Glu-109. In terms of domain architecture, Radical SAM core spans 115–354 (EDDRATLCVS…TIVRKTRGDD (240 aa)). A disulfide bridge links Cys-122 with Cys-359. Residues Cys-129, Cys-133, and Cys-136 each contribute to the [4Fe-4S] cluster site. S-adenosyl-L-methionine-binding positions include 183–184 (GE), Ser-215, 237–239 (SLH), and Asn-316. Catalysis depends on Cys-359, which acts as the S-methylcysteine intermediate.

It belongs to the radical SAM superfamily. RlmN family. The cofactor is [4Fe-4S] cluster.

It localises to the cytoplasm. It carries out the reaction adenosine(2503) in 23S rRNA + 2 reduced [2Fe-2S]-[ferredoxin] + 2 S-adenosyl-L-methionine = 2-methyladenosine(2503) in 23S rRNA + 5'-deoxyadenosine + L-methionine + 2 oxidized [2Fe-2S]-[ferredoxin] + S-adenosyl-L-homocysteine. The enzyme catalyses adenosine(37) in tRNA + 2 reduced [2Fe-2S]-[ferredoxin] + 2 S-adenosyl-L-methionine = 2-methyladenosine(37) in tRNA + 5'-deoxyadenosine + L-methionine + 2 oxidized [2Fe-2S]-[ferredoxin] + S-adenosyl-L-homocysteine. In terms of biological role, specifically methylates position 2 of adenine 2503 in 23S rRNA and position 2 of adenine 37 in tRNAs. m2A2503 modification seems to play a crucial role in the proofreading step occurring at the peptidyl transferase center and thus would serve to optimize ribosomal fidelity. The sequence is that of Dual-specificity RNA methyltransferase RlmN from Salmonella typhimurium (strain LT2 / SGSC1412 / ATCC 700720).